We begin with the raw amino-acid sequence, 198 residues long: Dynein light chain Tctex-type protein 2 (198 aa).

The interval 1-34 (MEKRGRGVKSSPIQTPNQTPQQAPVTPRKERRPS) is disordered. Positions 11–24 (SPIQTPNQTPQQAP) are enriched in polar residues.

Belongs to the dynein light chain Tctex-type family. In terms of assembly, interacts with CCDC159. Interacts with CSNK2B. Expressed predominantly in testis. Also expressed in brain, lung and trachea.

The protein localises to the cytoplasm. Its subcellular location is the cytoskeleton. The protein resides in the cytoplasmic granule. It localises to the membrane. Functionally, may be an accessory component of axonemal dynein and cytoplasmic dynein 1. Candidate for involvement in male sterility. The protein is Dynein light chain Tctex-type protein 2 of Homo sapiens (Human).